The following is a 144-amino-acid chain: Fluoride-specific ion channel FluC (144 aa).

A run of 4 helical transmembrane segments spans residues 7 to 27 (LIVMVGGALGTLARYLVSVAA), 33 to 53 (FIPWGTILPINALGSFVIGFF), 71 to 91 (LFVMIGLCGGYTTFSSFSLQT), and 105 to 125 (VNVAASVILCIGAVALGHITA). Residues glycine 79 and threonine 82 each contribute to the Na(+) site.

It belongs to the fluoride channel Fluc/FEX (TC 1.A.43) family.

The protein resides in the cell inner membrane. It carries out the reaction fluoride(in) = fluoride(out). Its activity is regulated as follows. Na(+) is not transported, but it plays an essential structural role and its presence is essential for fluoride channel function. Functionally, fluoride-specific ion channel. Important for reducing fluoride concentration in the cell, thus reducing its toxicity. This Gluconobacter oxydans (strain 621H) (Gluconobacter suboxydans) protein is Fluoride-specific ion channel FluC.